Here is a 349-residue protein sequence, read N- to C-terminus: Glycosyltransferase 8 domain-containing protein 2 (349 aa).

Residues 1–6 lie on the Cytoplasmic side of the membrane; it reads MAFLRK. The chain crosses the membrane as a helical; Signal-anchor for type II membrane protein span at residues 7 to 24; sequence VNQVLLLLLVLTLCGILY. Residues 25 to 349 are Lumenal-facing; the sequence is KKVHKGAVLK…AGIFKLHHNR (325 aa). Asn-234 carries an N-linked (GlcNAc...) asparagine glycan.

The protein belongs to the glycosyltransferase 8 family.

The protein resides in the membrane. The sequence is that of Glycosyltransferase 8 domain-containing protein 2 (Glt8d2) from Mus musculus (Mouse).